The sequence spans 266 residues: 4-hydroxy-tetrahydrodipicolinate reductase (266 aa).

11–16 is an NAD(+) binding site; sequence GALGKM. Residue Lys-39 participates in NADP(+) binding. 100–102 is a binding site for NAD(+); that stretch reads GTT. His-156 (proton donor/acceptor) is an active-site residue. His-157 is a (S)-2,3,4,5-tetrahydrodipicolinate binding site. Residue Lys-160 is the Proton donor of the active site. 166-167 serves as a coordination point for (S)-2,3,4,5-tetrahydrodipicolinate; sequence GT.

It belongs to the DapB family.

The protein resides in the cytoplasm. It carries out the reaction (S)-2,3,4,5-tetrahydrodipicolinate + NAD(+) + H2O = (2S,4S)-4-hydroxy-2,3,4,5-tetrahydrodipicolinate + NADH + H(+). It catalyses the reaction (S)-2,3,4,5-tetrahydrodipicolinate + NADP(+) + H2O = (2S,4S)-4-hydroxy-2,3,4,5-tetrahydrodipicolinate + NADPH + H(+). It functions in the pathway amino-acid biosynthesis; L-lysine biosynthesis via DAP pathway; (S)-tetrahydrodipicolinate from L-aspartate: step 4/4. Its function is as follows. Catalyzes the conversion of 4-hydroxy-tetrahydrodipicolinate (HTPA) to tetrahydrodipicolinate. The chain is 4-hydroxy-tetrahydrodipicolinate reductase from Syntrophomonas wolfei subsp. wolfei (strain DSM 2245B / Goettingen).